Here is a 605-residue protein sequence, read N- to C-terminus: Capsid scaffolding protein (605 aa).

Residues H48, S116, and H139 each act as charge relay system in the active site. A disordered region spans residues 235–275; that stretch reads ASDAPDLQKPDKALQSPPPASTDPDTMLSGNAGEGATACGG. Residues 281 to 300 are interaction with pAP; the sequence is QDLISVPRNTFMTLLQTNLD. Disordered stretches follow at residues 403–432 and 489–588; these read DYVPAPSRSNKRKRDPEEDEEGGGLFPGED and PHQS…KSVS. The Nuclear localization signal signature appears at 410-416; sequence RSNKRKR. Polar residues predominate over residues 568–579; sequence ASASGVAQSKEP. The interval 585–605 is interaction with major capsid protein; sequence KSVSAHLKSIFCEELLNKRVA.

The protein belongs to the herpesviridae capsid scaffolding protein family. As to quaternary structure, homomultimer. Interacts with major capsid protein. In terms of assembly, exists in a monomer-dimer equilibrium with the dimer being the active species. Capsid scaffolding protein is cleaved by assemblin after formation of the spherical procapsid. As a result, the capsid obtains its mature, icosahedral shape. Cleavages occur at two or more sites: release (R-site) and maturation (M-site).

Its subcellular location is the host cytoplasm. It localises to the host nucleus. The enzyme catalyses Cleaves -Ala-|-Ser- and -Ala-|-Ala- bonds in the scaffold protein.. Acts as a scaffold protein by binding major capsid protein in the cytoplasm, inducing the nuclear localization of both proteins. Multimerizes in the nucleus such as major capsid protein forms the icosahedral T=16 capsid. Autocatalytic cleavage releases the assembly protein, and subsequently abolishes interaction with major capsid protein. Cleavages products are evicted from the capsid before or during DNA packaging. In terms of biological role, protease that plays an essential role in virion assembly within the nucleus. Catalyzes the cleavage of the assembly protein after formation of the spherical procapsid. By that cleavage, the capsid matures and gains its icosahedral shape. The cleavage sites seem to include -Ala-Ser-, -Ala-Ala-, as well as Ala-Thr bonds. Assemblin and cleavages products are evicted from the capsid before or during DNA packaging. Its function is as follows. Plays a major role in capsid assembly. Acts as a scaffold protein by binding major capsid protein. Multimerizes in the nucleus such as major capsid protein forms the icosahedral T=16 capsid. Cleaved by assemblin after capsid completion. The cleavages products are evicted from the capsid before or during DNA packaging. The polypeptide is Capsid scaffolding protein (Epstein-Barr virus (strain AG876) (HHV-4)).